We begin with the raw amino-acid sequence, 526 residues long: Peptide chain release factor 3 (526 aa).

Positions 9–277 (DKRRTFAIIS…GIVEWAPKPL (269 aa)) constitute a tr-type G domain. Residues 18–25 (SHPDAGKT), 86–90 (DTPGH), and 140–143 (NKLD) contribute to the GTP site.

This sequence belongs to the TRAFAC class translation factor GTPase superfamily. Classic translation factor GTPase family. PrfC subfamily.

It is found in the cytoplasm. Functionally, increases the formation of ribosomal termination complexes and stimulates activities of RF-1 and RF-2. It binds guanine nucleotides and has strong preference for UGA stop codons. It may interact directly with the ribosome. The stimulation of RF-1 and RF-2 is significantly reduced by GTP and GDP, but not by GMP. This chain is Peptide chain release factor 3, found in Shewanella baltica (strain OS155 / ATCC BAA-1091).